A 1481-amino-acid polypeptide reads, in one-letter code: Protein shortage in chiasmata 1 ortholog (1481 aa).

Disordered stretches follow at residues 479-498 (TDVHQLHPQKRPIPSSEKEV) and 512-560 (KSKV…IQAS). Over residues 513-531 (SKVEANPKNDQEPEARIMQ) the composition is skewed to basic and acidic residues. A compositionally biased stretch (low complexity) spans 543 to 560 (SSQVPSAESASSSQIQAS).

The protein belongs to the XPF family. Highly divergent. In terms of assembly, interacts with TEX11. Interacts with SPO16. As to expression, mainly expressed in adult testis.

The protein localises to the chromosome. Its function is as follows. ATPase required during meiosis for the formation of crossover recombination intermediates. Binds DNA: preferentially binds to single-stranded DNA and DNA branched structures. Does not show nuclease activity in vitro, but shows ATPase activity, which is stimulated by the presence of single-stranded DNA. Plays a key role in homologous recombination and crossing-over in meiotic prophase I in male and female germ cells. Required for proper synaptonemal complex assembly and homologous chromosome pairing. Required for recruitment of TEX11 and MSH4 to recombination intermediates. The protein is Protein shortage in chiasmata 1 ortholog of Mus musculus (Mouse).